Here is a 439-residue protein sequence, read N- to C-terminus: MSQTHLSNQKFADLPLHPEVKQALAENGFEFCTPIQALSLPVLLQSKDIAGQAQTGTGKTMAFLVATFNHLLSSSIPEGRQLNQPRAIIMAPTRELAIQIAKDAILLAKHTRLKVGIVYGGESYDVQRKVLDQGVDILIGTTGRIIDYVRQGIINLNAIQAVVLDEADRMFDLGFIKDIRFLFRRMPNADQRLNMLFSATLSMKVQELAYDHMNDPVKVEIAPEEKTSKNIKEEIFYPSQEDKMRLLLTLIEEDWPEKAIVFSNTKHSCENLWSWLEGDGHRVGLLTGDVPQKKRIRILEQFTQGQLDILVATDVAARGLHISDVSHVYNYDLPDDCEDYVHRIGRTGRAGNKGVSVSFACEEYALNLPAIETYINHSIPVSNYDRDALLDDIPSPVKIHRKHPAGARNLRERSGAGRTPGAHRSGGRPPRHDRTRRQP.

The Q motif signature appears at 9–37 (QKFADLPLHPEVKQALAENGFEFCTPIQA). The region spanning 40–219 (LPVLLQSKDI…YDHMNDPVKV (180 aa)) is the Helicase ATP-binding domain. 53-60 (AQTGTGKT) contributes to the ATP binding site. A DEAD box motif is present at residues 165–168 (DEAD). Residues 243–390 (KMRLLLTLIE…VSNYDRDALL (148 aa)) enclose the Helicase C-terminal domain. The segment at 395–439 (SPVKIHRKHPAGARNLRERSGAGRTPGAHRSGGRPPRHDRTRRQP) is disordered. Basic residues predominate over residues 425–439 (SGGRPPRHDRTRRQP).

The protein belongs to the DEAD box helicase family. RhlB subfamily. Component of the RNA degradosome, which is a multiprotein complex involved in RNA processing and mRNA degradation.

It localises to the cytoplasm. It catalyses the reaction ATP + H2O = ADP + phosphate + H(+). Functionally, DEAD-box RNA helicase involved in RNA degradation. Has RNA-dependent ATPase activity and unwinds double-stranded RNA. The protein is ATP-dependent RNA helicase RhlB of Shewanella oneidensis (strain ATCC 700550 / JCM 31522 / CIP 106686 / LMG 19005 / NCIMB 14063 / MR-1).